The sequence spans 96 residues: Large ribosomal subunit protein bL27 (96 aa).

A propeptide spanning residues 1–9 (MLRLDLQFF) is cleaved from the precursor.

Belongs to the bacterial ribosomal protein bL27 family. The N-terminus is cleaved by ribosomal processing cysteine protease Prp.

The protein is Large ribosomal subunit protein bL27 of Geobacillus kaustophilus (strain HTA426).